Here is a 116-residue protein sequence, read N- to C-terminus: UPF0499 protein ATEG_06693 (116 aa).

Residues 1-18 (MKLTGLLSLALLTTLALA) form the signal peptide. 3 disulfides stabilise this stretch: Cys32–Cys46, Cys36–Cys49, and Cys42–Cys54.

Belongs to the UPF0499 family.

Its subcellular location is the secreted. The protein is UPF0499 protein ATEG_06693 of Aspergillus terreus (strain NIH 2624 / FGSC A1156).